The following is a 531-amino-acid chain: Putative cysteine ligase BshC (531 aa).

The stretch at 447-481 (KAQEKKQTKGLDNLEKRLLKAEKKMHSEKLKKIIE) forms a coiled coil.

Belongs to the BshC family.

In Flavobacterium psychrophilum (strain ATCC 49511 / DSM 21280 / CIP 103535 / JIP02/86), this protein is Putative cysteine ligase BshC.